The primary structure comprises 146 residues: Leghemoglobin Lb120-34 (146 aa).

One can recognise a Globin domain in the interval 2 to 146; that stretch reads GFTEKQEALV…LASAIKKAMN (145 aa). A nitrated tyrosine mark is found at tyrosine 24 and tyrosine 29. Serine 44 provides a ligand contact to heme b. Serine 44 carries the phosphoserine modification. Residue histidine 61 participates in O2 binding. Lysine 64, histidine 93, and lysine 96 together coordinate heme b. Tyrosine 134 bears the Nitrated tyrosine mark.

It belongs to the plant globin family. In terms of assembly, monomer. In terms of processing, nitrated in effective nodules and particularly in hypoxic conditions; this mechanism may play a protective role in the symbiosis by buffering toxic peroxynitrite NO(2)(-). Nitration level decrease during nodule senescence. Post-translationally, phosphorylation at Ser-44 disrupts the molecular environment of its porphyrin ring oxygen binding pocket, thus leading to a reduced oxygen consumption and to the delivery of oxygen O(2) to symbiosomes. In terms of tissue distribution, root nodules.

It is found in the cytoplasm. The protein localises to the cytosol. The protein resides in the nucleus. In terms of biological role, leghemoglobin that reversibly binds oxygen O(2) through a pentacoordinated heme iron. In root nodules, facilitates the diffusion of oxygen to the bacteroids while preventing the bacterial nitrogenase from being inactivated by buffering dioxygen, nitric oxide and carbon monoxide, and promoting the formation of reactive oxygen species (ROS, e.g. H(2)O(2)). This role is essential for symbiotic nitrogen fixation (SNF). The protein is Leghemoglobin Lb120-34 of Pisum sativum (Garden pea).